We begin with the raw amino-acid sequence, 221 residues long: Ras-related protein Rab-28 (221 aa).

At Ser2 the chain carries N-acetylserine. Ser8 bears the Phosphoserine mark. GTP is bound by residues Gly21, Gly24, Lys25, Thr26, Ser27, Gly38, Lys39, Tyr41, and Thr44. Mg(2+) is bound at residue Thr26. Residues 35 to 49 form a switch I region; sequence ETFGKRYKQTIGLDF. Residues Thr44 and Asp68 each coordinate Mg(2+). The switch II stretch occupies residues 68-85; it reads DIGGQTIGGKMLDKYIYG. GTP is bound by residues Gly71, Asn129, Lys130, Asp132, Ala160, and Lys161. A Cysteine methyl ester modification is found at Cys218. Cys218 carries the S-farnesyl cysteine lipid modification. Positions 219-221 are cleaved as a propeptide — removed in mature form; sequence AVQ.

This sequence belongs to the small GTPase superfamily. Rab family. Interacts (prenylated form) with PDE6D; the interaction promotes RAB28 delivery to the photoreceptor outer segments. Interacts with KCNJ13; the interaction may facilitate cone outer segments phagocytosis. Also participates in nuclear factor kappa-B p65/RELA nuclear transport in endothelial cells. The cofactor is Mg(2+). In terms of processing, isoprenylated.

It localises to the cell membrane. The protein resides in the cytoplasm. Its subcellular location is the cytoskeleton. It is found in the cilium basal body. The protein localises to the nucleus. The enzyme catalyses GTP + H2O = GDP + phosphate + H(+). With respect to regulation, regulated by guanine nucleotide exchange factors (GEFs) which promote the exchange of bound GDP for free GTP. Regulated by GTPase activating proteins (GAPs) which increase the GTP hydrolysis activity. Inhibited by GDP dissociation inhibitors (GDIs). The small GTPases Rab are key regulators of intracellular membrane trafficking, from the formation of transport vesicles to their fusion with membranes. Rabs cycle between an inactive GDP-bound form and an active GTP-bound form that is able to recruit to membranes different sets of downstream effectors directly responsible for vesicle formation, movement, tethering and fusion. RAB28 is required for shedding and phagocytosis of cone cell outer segments (OS) discs in the retina. Also participates in nuclear factor kappa-B p65/RELA nuclear transport in endothelial cells. The protein is Ras-related protein Rab-28 (RAB28) of Pongo abelii (Sumatran orangutan).